The chain runs to 195 residues: ATP-dependent Clp protease proteolytic subunit 2 (195 aa).

Catalysis depends on Ser95, which acts as the Nucleophile. Residue His120 is part of the active site.

The protein belongs to the peptidase S14 family. As to quaternary structure, fourteen ClpP subunits assemble into 2 heptameric rings which stack back to back to give a disk-like structure with a central cavity, resembling the structure of eukaryotic proteasomes.

Its subcellular location is the cytoplasm. It carries out the reaction Hydrolysis of proteins to small peptides in the presence of ATP and magnesium. alpha-casein is the usual test substrate. In the absence of ATP, only oligopeptides shorter than five residues are hydrolyzed (such as succinyl-Leu-Tyr-|-NHMec, and Leu-Tyr-Leu-|-Tyr-Trp, in which cleavage of the -Tyr-|-Leu- and -Tyr-|-Trp bonds also occurs).. Its function is as follows. Cleaves peptides in various proteins in a process that requires ATP hydrolysis. Has a chymotrypsin-like activity. Plays a major role in the degradation of misfolded proteins. The protein is ATP-dependent Clp protease proteolytic subunit 2 of Methylococcus capsulatus (strain ATCC 33009 / NCIMB 11132 / Bath).